The primary structure comprises 26 residues: Phospholipase A2 homolog A1 (26 aa).

Post-translationally, contains 7 disulfide bonds. Expressed by the venom gland.

Its subcellular location is the secreted. The sequence is that of Phospholipase A2 homolog A1 from Micrurus pyrrhocryptus (Coral snake).